Here is a 117-residue protein sequence, read N- to C-terminus: Small ribosomal subunit protein bS6 (117 aa).

This sequence belongs to the bacterial ribosomal protein bS6 family.

In terms of biological role, binds together with bS18 to 16S ribosomal RNA. The chain is Small ribosomal subunit protein bS6 from Porphyromonas gingivalis (strain ATCC BAA-308 / W83).